The primary structure comprises 367 residues: Anhydro-N-acetylmuramic acid kinase (367 aa).

Position 13–20 (13–20 (GTSMDGAD)) interacts with ATP.

This sequence belongs to the anhydro-N-acetylmuramic acid kinase family.

The enzyme catalyses 1,6-anhydro-N-acetyl-beta-muramate + ATP + H2O = N-acetyl-D-muramate 6-phosphate + ADP + H(+). The protein operates within amino-sugar metabolism; 1,6-anhydro-N-acetylmuramate degradation. It functions in the pathway cell wall biogenesis; peptidoglycan recycling. In terms of biological role, catalyzes the specific phosphorylation of 1,6-anhydro-N-acetylmuramic acid (anhMurNAc) with the simultaneous cleavage of the 1,6-anhydro ring, generating MurNAc-6-P. Is required for the utilization of anhMurNAc either imported from the medium or derived from its own cell wall murein, and thus plays a role in cell wall recycling. The polypeptide is Anhydro-N-acetylmuramic acid kinase (Neisseria meningitidis serogroup B (strain ATCC BAA-335 / MC58)).